The following is a 144-amino-acid chain: Eukaryotic translation initiation factor 1A (144 aa).

Over residues 1–15 the composition is skewed to basic residues; sequence MPKNKGKGGKNRKRG. Disordered regions lie at residues 1 to 25 and 120 to 144; these read MPKN…DKRE and DVDG…IDKI. Residues 16-25 show a composition bias toward basic and acidic residues; sequence KNEADDDKRE. One can recognise an S1-like domain in the interval 22-96; that stretch reads DKRELVFKED…DKADVILKYM (75 aa).

It belongs to the eIF-1A family.

In terms of biological role, seems to be required for maximal rate of protein biosynthesis. Enhances ribosome dissociation into subunits and stabilizes the binding of the initiator Met-tRNA(I) to 40 S ribosomal subunits. This is Eukaryotic translation initiation factor 1A from Triticum aestivum (Wheat).